The chain runs to 85 residues: Large ribosomal subunit protein bL27 (85 aa).

The tract at residues 1–21 (MAHKKAGGSTRNGRDSNAKRL) is disordered.

The protein belongs to the bacterial ribosomal protein bL27 family.

This chain is Large ribosomal subunit protein bL27, found in Erwinia tasmaniensis (strain DSM 17950 / CFBP 7177 / CIP 109463 / NCPPB 4357 / Et1/99).